Reading from the N-terminus, the 243-residue chain is Phosphoribosyl isomerase A (243 aa).

The active-site Proton acceptor is the D10. D129 functions as the Proton donor in the catalytic mechanism.

It belongs to the HisA/HisF family.

The protein localises to the cytoplasm. It catalyses the reaction 1-(5-phospho-beta-D-ribosyl)-5-[(5-phospho-beta-D-ribosylamino)methylideneamino]imidazole-4-carboxamide = 5-[(5-phospho-1-deoxy-D-ribulos-1-ylimino)methylamino]-1-(5-phospho-beta-D-ribosyl)imidazole-4-carboxamide. It carries out the reaction N-(5-phospho-beta-D-ribosyl)anthranilate = 1-(2-carboxyphenylamino)-1-deoxy-D-ribulose 5-phosphate. The protein operates within amino-acid biosynthesis; L-histidine biosynthesis; L-histidine from 5-phospho-alpha-D-ribose 1-diphosphate: step 4/9. It participates in amino-acid biosynthesis; L-tryptophan biosynthesis; L-tryptophan from chorismate: step 3/5. Functionally, involved in both the histidine and tryptophan biosynthetic pathways. This chain is Phosphoribosyl isomerase A, found in Mycobacteroides abscessus (strain ATCC 19977 / DSM 44196 / CCUG 20993 / CIP 104536 / JCM 13569 / NCTC 13031 / TMC 1543 / L948) (Mycobacterium abscessus).